The following is a 730-amino-acid chain: Regulatory factor X 4 (730 aa).

Positions Tyr-30–Asn-41 are enriched in polar residues. The interval Tyr-30 to Pro-59 is disordered. The segment at residues Thr-61–Glu-136 is a DNA-binding region (RFX-type winged-helix). The tract at residues Glu-500–Gln-532 is disordered. Over residues Ser-512–Pro-528 the composition is skewed to low complexity.

The protein belongs to the RFX family.

The protein resides in the nucleus. Its function is as follows. Required for neural tube ciliogenesis during embryogenesis. This Xenopus laevis (African clawed frog) protein is Regulatory factor X 4.